The sequence spans 299 residues: Dye-decolorizing peroxidase YfeX (299 aa).

Asp143 acts as the Proton acceptor in catalysis. His215 is a binding site for heme.

Belongs to the DyP-type peroxidase family. It depends on heme b as a cofactor.

It is found in the cytoplasm. In terms of biological role, has both general peroxidase activity and dye-decolorizing activity. Can catalyze the oxidation of both protoporphyrinogen IX and coproporphyrinogen III to their corresponding porphyrins. Also efficiently decolorizes the dyes alizarin red and Cibacron blue F3GA. This chain is Dye-decolorizing peroxidase YfeX (yfeX), found in Escherichia coli (strain K12).